Consider the following 75-residue polypeptide: Protein Tlp homolog (75 aa).

Residues arginine 52–methionine 75 form a disordered region.

The protein belongs to the Tlp family.

This is Protein Tlp homolog from Clostridium botulinum (strain Okra / Type B1).